A 299-amino-acid polypeptide reads, in one-letter code: Ribosomal RNA small subunit methyltransferase H (299 aa).

S-adenosyl-L-methionine is bound by residues 24 to 26, Asp-43, Phe-68, Asp-90, and Gln-97; that span reads GGH.

It belongs to the methyltransferase superfamily. RsmH family.

Its subcellular location is the cytoplasm. The enzyme catalyses cytidine(1402) in 16S rRNA + S-adenosyl-L-methionine = N(4)-methylcytidine(1402) in 16S rRNA + S-adenosyl-L-homocysteine + H(+). Its function is as follows. Specifically methylates the N4 position of cytidine in position 1402 (C1402) of 16S rRNA. This Francisella tularensis subsp. tularensis (strain WY96-3418) protein is Ribosomal RNA small subunit methyltransferase H.